The following is a 682-amino-acid chain: Methionine--tRNA ligase (682 aa).

A 'HIGH' region motif is present at residues 15–25 (PYANGAIHLGH). The Zn(2+) site is built by Cys146, Cys149, Cys159, and Cys162. Positions 331 to 335 (KMSKS) match the 'KMSKS' region motif. An ATP-binding site is contributed by Lys334. One can recognise a tRNA-binding domain in the interval 580–682 (DFAKLDMRVA…NGVTAGMQVK (103 aa)).

It belongs to the class-I aminoacyl-tRNA synthetase family. MetG type 1 subfamily. As to quaternary structure, homodimer. Zn(2+) is required as a cofactor.

It localises to the cytoplasm. The enzyme catalyses tRNA(Met) + L-methionine + ATP = L-methionyl-tRNA(Met) + AMP + diphosphate. In terms of biological role, is required not only for elongation of protein synthesis but also for the initiation of all mRNA translation through initiator tRNA(fMet) aminoacylation. The sequence is that of Methionine--tRNA ligase from Haemophilus influenzae (strain PittGG).